Here is a 53-residue protein sequence, read N- to C-terminus: UPF0391 membrane protein Bxeno_A1464 (53 aa).

The next 2 membrane-spanning stretches (helical) occupy residues 5–25 (AAIFFIIAIIAAVFGFGGIAA) and 30–50 (IAKVLFFIFVVIFLVTLLMGV).

The protein belongs to the UPF0391 family.

The protein resides in the cell membrane. The sequence is that of UPF0391 membrane protein Bxeno_A1464 from Paraburkholderia xenovorans (strain LB400).